A 387-amino-acid chain; its full sequence is 3-ketoacyl-CoA thiolase FadA (387 aa).

Cys-91 serves as the catalytic Acyl-thioester intermediate. Active-site proton acceptor residues include His-343 and Cys-373.

The protein belongs to the thiolase-like superfamily. Thiolase family. In terms of assembly, heterotetramer of two alpha chains (FadB) and two beta chains (FadA).

The protein resides in the cytoplasm. It carries out the reaction an acyl-CoA + acetyl-CoA = a 3-oxoacyl-CoA + CoA. Its pathway is lipid metabolism; fatty acid beta-oxidation. In terms of biological role, catalyzes the final step of fatty acid oxidation in which acetyl-CoA is released and the CoA ester of a fatty acid two carbons shorter is formed. Involved in the aerobic and anaerobic degradation of long-chain fatty acids. The protein is 3-ketoacyl-CoA thiolase FadA (fadA) of Escherichia coli (strain K12).